Consider the following 142-residue polypeptide: Large ribosomal subunit protein uL13 (142 aa).

This sequence belongs to the universal ribosomal protein uL13 family. Part of the 50S ribosomal subunit.

This protein is one of the early assembly proteins of the 50S ribosomal subunit, although it is not seen to bind rRNA by itself. It is important during the early stages of 50S assembly. This is Large ribosomal subunit protein uL13 from Actinobacillus pleuropneumoniae serotype 5b (strain L20).